Reading from the N-terminus, the 168-residue chain is Vasopressin-neurophysin 2-copeptin (168 aa).

The first 23 residues, 1–23, serve as a signal peptide directing secretion; the sequence is MLAMMLNTTLSACFLSLLALTSA. A disulfide bridge connects residues C24 and C29. Residue G32 is modified to Glycine amide. Disulfide bonds link C45–C89, C48–C62, C56–C79, C63–C69, C96–C108, C102–C120, and C109–C114. N-linked (GlcNAc...) asparagine glycosylation occurs at N135.

Belongs to the vasopressin/oxytocin family. In terms of assembly, interacts with vasopressin receptors V1bR/AVPR1B (Ki=85 pM), V1aR/AVPR1A (Ki=0.6 nM) and V2R/AVPR2 (Ki=4.9 nM). Interacts with oxytocin receptor (OXTR) (Ki=110 nM).

The protein resides in the secreted. In terms of biological role, neurophysin 2 specifically binds vasopressin. Functionally, vasopressin has a direct antidiuretic action on the kidney, it also causes vasoconstriction of the peripheral vessels. Acts by binding to vasopressin receptors (V1bR/AVPR1B, V1aR/AVPR1A, and V2R/AVPR2). The chain is Vasopressin-neurophysin 2-copeptin (Avp) from Rattus norvegicus (Rat).